The following is a 149-amino-acid chain: Large ribosomal subunit protein uL15 (149 aa).

The disordered stretch occupies residues 1-53 (MRLHTLQPAPGAKSTRKRVGRGTSSGHGKTSGFGHKGQKARSGRVGKRGFEGG). A compositionally biased stretch (gly residues) spans 23–35 (TSSGHGKTSGFGH). The segment covering 36–47 (KGQKARSGRVGK) has biased composition (basic residues).

Belongs to the universal ribosomal protein uL15 family. In terms of assembly, part of the 50S ribosomal subunit.

Functionally, binds to the 23S rRNA. The sequence is that of Large ribosomal subunit protein uL15 from Coprothermobacter proteolyticus (strain ATCC 35245 / DSM 5265 / OCM 4 / BT).